The primary structure comprises 343 residues: Olfactory receptor 6K6 (343 aa).

The Extracellular portion of the chain corresponds to 1-53 (MKQYSVGNQHSNYRSLLFPFLCSQMTQLTASGNQTMVTEFLFSMFPHAHRGGL). N-linked (GlcNAc...) asparagine glycosylation is present at N33. Residues 54-74 (LFFIPLLLIYGFILTGNLIMF) traverse the membrane as a helical segment. Residues 75–82 (IVIQVGMA) are Cytoplasmic-facing. The helical transmembrane segment at 83–103 (LHTPLYFFISVLSFLEICYTT) threads the bilayer. The Extracellular segment spans residues 104 to 127 (TTIPKMLSCLISEQKSISVAGCLL). A disulfide bridge links C125 with C217. The helical transmembrane segment at 128–148 (QMYFFHSLGITESCVLTAMAI) threads the bilayer. Residues 149-167 (DRYIAICNPLRYPTIMIPK) are Cytoplasmic-facing. Residues 168 to 188 (LCIQLTVGSCFCGFLLVLPEI) form a helical membrane-spanning segment. Topologically, residues 189–224 (AWISTLPFCGSNQIHQIFCDFTPVLSLACTDTFLVV) are extracellular. A helical transmembrane segment spans residues 225–244 (IVDAIHAAEIVASFLVIALS). Topologically, residues 245–264 (YIRIIIVILGMHSAEGHHKA) are cytoplasmic. Residues 265–285 (FSTCAAHLAVFLLFFGSVAVM) form a helical membrane-spanning segment. Topologically, residues 286 to 298 (YLRFSATYSVFWD) are extracellular. The helical transmembrane segment at 299-319 (TAIAVTFVILAPFFNPIIYSL) threads the bilayer. Topologically, residues 320–343 (KNKDMKEAIGRLFHYQKRAGWAGK) are cytoplasmic.

It belongs to the G-protein coupled receptor 1 family.

The protein resides in the cell membrane. Its function is as follows. Odorant receptor. The protein is Olfactory receptor 6K6 (OR6K6) of Homo sapiens (Human).